Consider the following 253-residue polypeptide: Triosephosphate isomerase (253 aa).

8 to 10 contributes to the substrate binding site; it reads NWK. Catalysis depends on His93, which acts as the Electrophile. Glu165 functions as the Proton acceptor in the catalytic mechanism. Residues Gly171, Ser210, and 231-232 each bind substrate; that span reads GG.

The protein belongs to the triosephosphate isomerase family. As to quaternary structure, homodimer.

The protein localises to the cytoplasm. It carries out the reaction D-glyceraldehyde 3-phosphate = dihydroxyacetone phosphate. The protein operates within carbohydrate biosynthesis; gluconeogenesis. It functions in the pathway carbohydrate degradation; glycolysis; D-glyceraldehyde 3-phosphate from glycerone phosphate: step 1/1. In terms of biological role, involved in the gluconeogenesis. Catalyzes stereospecifically the conversion of dihydroxyacetone phosphate (DHAP) to D-glyceraldehyde-3-phosphate (G3P). This Francisella tularensis subsp. mediasiatica (strain FSC147) protein is Triosephosphate isomerase.